Reading from the N-terminus, the 456-residue chain is Chordin-like protein 1 (456 aa).

The first 28 residues, 1–28 (MRRKWRSEDFHFVFFGVLCLLLIDRGKL), serve as a signal peptide directing secretion. 3 VWFC domains span residues 36 to 101 (TYCV…PRCP), 115 to 181 (KSCE…PVCR), and 262 to 327 (RVCV…KVCP). Asn120 carries N-linked (GlcNAc...) asparagine glycosylation. The short motif at 181 to 183 (RGD) is the Cell attachment site element. Residue Asn295 is glycosylated (N-linked (GlcNAc...) asparagine).

In terms of tissue distribution, mainly expressed in the ventral retina.

The protein localises to the secreted. Seems to antagonize the function of BMP4 by binding to it and preventing its interaction with receptors. The polypeptide is Chordin-like protein 1 (CHRDL1) (Gallus gallus (Chicken)).